The sequence spans 366 residues: Transcription factor bHLH74 (366 aa).

A compositionally biased stretch (gly residues) spans 1–11; it reads MGGESNEGGEM. Disordered stretches follow at residues 1–20 and 123–201; these read MGGE…DDES and GESS…APKE. 2 stretches are compositionally biased toward basic and acidic residues: residues 123 to 134 and 159 to 170; these read GESSHEDHHQVS and KAVEEFQEDPQR. The region spanning 212–262 is the bHLH domain; that stretch reads QATNSHSLAERVRREKISERMRLLQELVPGCNKITGKAVMLDEIINYVQSL.

In terms of assembly, homodimer. Interacts with IBH1. Binds reversibly to CRY2 after blue light illumination. In terms of tissue distribution, expressed constitutively in roots, leaves, stems, and flowers.

The protein resides in the nucleus. Transcriptional activator involved in cell elongation. Regulates the expression of a subset of genes involved in cell expansion by binding to the G-box motif. Binds to chromatin DNA of the FT gene and promotes its expression, and thus triggers flowering in response to blue light. This chain is Transcription factor bHLH74 (BHLH74), found in Arabidopsis thaliana (Mouse-ear cress).